Here is a 433-residue protein sequence, read N- to C-terminus: Pyrimidine-nucleoside phosphorylase (433 aa).

Residue 81 to 83 (KHS) participates in phosphate binding. K(+) is bound by residues Gly88 and Thr90. Phosphate is bound by residues Thr92, 108–110 (KMS), and Thr120. Residues Arg168 and Lys187 each coordinate substrate. Residues Leu243, Ala246, and Glu255 each contribute to the K(+) site.

It belongs to the thymidine/pyrimidine-nucleoside phosphorylase family. As to quaternary structure, homodimer. The cofactor is K(+).

It carries out the reaction uridine + phosphate = alpha-D-ribose 1-phosphate + uracil. It catalyses the reaction thymidine + phosphate = 2-deoxy-alpha-D-ribose 1-phosphate + thymine. The catalysed reaction is 2'-deoxyuridine + phosphate = 2-deoxy-alpha-D-ribose 1-phosphate + uracil. Catalyzes phosphorolysis of the pyrimidine nucleosides uridine, thymidine and 2'-deoxyuridine with the formation of the corresponding pyrimidine base and ribose-1-phosphate. This Staphylococcus aureus (strain Mu50 / ATCC 700699) protein is Pyrimidine-nucleoside phosphorylase (pdp).